The following is a 482-amino-acid chain: MPTYLITVAGEIPLKSKKTRSRLYYRLIDNIRRRLARRNITLQVAKVIDAKILVETQVEALQELSRVFGVHRVSEVQVLEFRDLGELAKEIASRTIEHVRDRKFAVRVKRSGRHGFTSLDVAREVGALLKPYSKGVDLENPDIEVEVEVRGNKAYLYSNVAMGPGGLPLGSSGRALVLFSGGFDSPVAAWMIAKRGVEVDFLHYVMGSSEVSRQAFSVARKLSEEWLSSYNPRFITVDFTPLIAEIEERIEWSYRQVVLRALMYMVADKIATELGYNTIVTGEALSQASSQTLANLVAVESAVSPRSIILRPLIGFDKEEIIEYSRRIGLYDYSSRVAETCAIAPTHVVTRISSEKLKSLIERLDVRLVERMAGEYRVVDVFSASPEEAVPGYSEEIDSIPGDSIIIDVRSYEEYKRDALPGAIHLSMVDFNNLPRDKPVVLYCTTGGISLLLARELRGKGFKAYSLRGGLARYRAGLEKTR.

Residues 58-160 (VEALQELSRV…GNKAYLYSNV (103 aa)) enclose the THUMP domain. ATP is bound by residues 178-179 (LF), 203-204 (HY), arginine 260, glycine 282, and glutamine 291. Residues cysteine 341 and cysteine 444 are joined by a disulfide bond. Residues 400–482 (IPGDSIIIDV…RYRAGLEKTR (83 aa)) form the Rhodanese domain. Residue cysteine 444 is the Cysteine persulfide intermediate of the active site.

The protein belongs to the ThiI family.

Its subcellular location is the cytoplasm. It catalyses the reaction [ThiI sulfur-carrier protein]-S-sulfanyl-L-cysteine + a uridine in tRNA + 2 reduced [2Fe-2S]-[ferredoxin] + ATP + H(+) = [ThiI sulfur-carrier protein]-L-cysteine + a 4-thiouridine in tRNA + 2 oxidized [2Fe-2S]-[ferredoxin] + AMP + diphosphate. The catalysed reaction is [ThiS sulfur-carrier protein]-C-terminal Gly-Gly-AMP + S-sulfanyl-L-cysteinyl-[cysteine desulfurase] + AH2 = [ThiS sulfur-carrier protein]-C-terminal-Gly-aminoethanethioate + L-cysteinyl-[cysteine desulfurase] + A + AMP + 2 H(+). It functions in the pathway cofactor biosynthesis; thiamine diphosphate biosynthesis. Functionally, catalyzes the ATP-dependent transfer of a sulfur to tRNA to produce 4-thiouridine in position 8 of tRNAs, which functions as a near-UV photosensor. Also catalyzes the transfer of sulfur to the sulfur carrier protein ThiS, forming ThiS-thiocarboxylate. This is a step in the synthesis of thiazole, in the thiamine biosynthesis pathway. The sulfur is donated as persulfide by IscS. This chain is tRNA sulfurtransferase, found in Desulfurococcus amylolyticus (strain DSM 18924 / JCM 16383 / VKM B-2413 / 1221n) (Desulfurococcus kamchatkensis).